Reading from the N-terminus, the 83-residue chain is Protein L83L (83 aa).

Polar residues predominate over residues 1 to 10 (MDTSLKNNDG). The interval 1-25 (MDTSLKNNDGASEADNKNYQDYKDE) is disordered. Residues 14–25 (ADNKNYQDYKDE) show a composition bias toward basic and acidic residues.

It belongs to the asfivirus L83L family. Interacts with host IL1B.

It is found in the host cytoplasm. Functionally, may subvert the host innate immune response by interacting with host IL1B and interfering with its function. The sequence is that of Protein L83L from Ornithodoros (relapsing fever ticks).